Reading from the N-terminus, the 431-residue chain is Glycolipid 2-alpha-mannosyltransferase 1 (431 aa).

Residues 1-9 (MASTRSNAR) lie on the Cytoplasmic side of the membrane. A helical; Signal-anchor for type II membrane protein membrane pass occupies residues 10–28 (LIRFGIFALVLIGCGYILT). Residues 29 to 431 (RGSSFQPPNY…RQKGWEKYTA (403 aa)) are Lumenal-facing. Residues 35-44 (PPNYQQTQSP) show a composition bias toward polar residues. A disordered region spans residues 35–73 (PPNYQQTQSPAAHEKQTGNVAAGGGAGSGSAGAQVPLGK). The segment covering 55–64 (AAGGGAGSGS) has biased composition (gly residues). Catalysis depends on Glu318, which acts as the Nucleophile.

This sequence belongs to the glycosyltransferase 15 family.

The protein resides in the golgi apparatus membrane. It functions in the pathway protein modification; protein glycosylation. Its function is as follows. Involved in O-glycosylation of cell wall and secreted proteins. Transfers an alpha-D-mannosyl residue from GDP-mannose into lipid-linked oligosaccharide, forming an alpha-(1-&gt;2)-D-mannosyl-D-mannose linkage. Mainly responsible for the addition of the second mannose residue in an O-linked mannose pentamer. Can also substitute for MNT2 by adding the third mannose residue. Important for adherence to host surfaces and for virulence. The polypeptide is Glycolipid 2-alpha-mannosyltransferase 1 (MNT1) (Candida albicans (strain SC5314 / ATCC MYA-2876) (Yeast)).